The following is a 114-amino-acid chain: Large ribosomal subunit protein bL20c (114 aa).

Belongs to the bacterial ribosomal protein bL20 family.

The protein localises to the plastid. The protein resides in the chloroplast. In terms of biological role, binds directly to 23S ribosomal RNA and is necessary for the in vitro assembly process of the 50S ribosomal subunit. It is not involved in the protein synthesizing functions of that subunit. This chain is Large ribosomal subunit protein bL20c (rpl20), found in Guillardia theta (Cryptophyte).